Here is a 528-residue protein sequence, read N- to C-terminus: GMP synthase [glutamine-hydrolyzing] (528 aa).

The Glutamine amidotransferase type-1 domain occupies 13 to 204 (AIVILDFGSQ…VNHICGCEQD (192 aa)). C90 (nucleophile) is an active-site residue. Residues H178 and E180 contribute to the active site. The GMPS ATP-PPase domain occupies 205-403 (WTTNAFIDEA…LGLPEEIVRR (199 aa)). 232 to 238 (SGGVDSS) contributes to the ATP binding site.

Homodimer.

It catalyses the reaction XMP + L-glutamine + ATP + H2O = GMP + L-glutamate + AMP + diphosphate + 2 H(+). It participates in purine metabolism; GMP biosynthesis; GMP from XMP (L-Gln route): step 1/1. Functionally, catalyzes the synthesis of GMP from XMP. In Synechococcus sp. (strain CC9902), this protein is GMP synthase [glutamine-hydrolyzing].